Consider the following 609-residue polypeptide: All-trans-retinol 13,14-reductase (609 aa).

The signal sequence occupies residues 1–21 (MWITALLLVVLLLVVVHRVYV).

Belongs to the carotenoid/retinoid oxidoreductase family. CrtISO subfamily. The cofactor is NAD(+). NADP(+) serves as cofactor. It depends on FAD as a cofactor. Highly expressed in liver, kidney and heart.

The protein resides in the endoplasmic reticulum membrane. The enzyme catalyses all-trans-13,14-dihydroretinol + A = all-trans-retinol + AH2. Functionally, catalyzes the saturation of all-trans-retinol to all-trans-13,14-dihydroretinol. Does not exhibit any activity toward all-trans-retinoic acid, nor 9-cis, 11-cis or 13-cis-retinol isomers. May play a role in the metabolism of vitamin A. Independently of retinol conversion, may regulate liver metabolism upstream of MLXIPL/ChREBP. May play a role in adipocyte differentiation. The chain is All-trans-retinol 13,14-reductase (Retsat) from Rattus norvegicus (Rat).